We begin with the raw amino-acid sequence, 646 residues long: MASCPKAIWNWRFQRAVFRTVQLLCFSVLIFEVINQKEVSAWTYHYSNKTYSWNYSRAFCQKYYTDLVAIQNKNEIAYLNETIPYYNSYYWIGIRKINNKWTWVGTKKTLTEEAENWADNEPNNKRNNQDCVEIYIKSLSAPGKWNDEPCWKRKRALCYRASCQDMSCSKQGECIETIGNYTCSCYPGFYGPECEYVRECGEFDLPQHVHMNCSHPLGNFSFNSHCSFHCAEGYALNGPSELECLASGIWTNSPPQCVAVQCPALKSPEQGSMSCVQSAEAFQHQSSCSFSCEEGFALVGPEVVHCTALGVWTAPTPVCKALQCQDLPTSTKARVNCSHPFGDFRYQSTCSFTCDEGSFLVGASVLQCLDTGNWDAPFPECQAVTCAALPNPQNGEKTCVQPLGGSSYESTCWFTCHEGFSLSGPERLDCTPSGHWTGSPPTCEEVDTVSAPAPGVQCPTLIAPKQGTMSCQHHVRNFGLNTTCHFGCKAGFTLLGDSALQCRPSRQWTAAAPTCRAVKCAKLPVTEPIVMNCSNPWGNFSYGSTCSFHCPEGQLLNGSERTVCQENGQWSTTMPTCQAGPLTIQETLTYVGGAAAGTTGLVTGSILLALLRRRCRQKDDGKSPLNPQSHLGTYGVFTNAAFDPSP.

A signal peptide spans 1–41 (MASCPKAIWNWRFQRAVFRTVQLLCFSVLIFEVINQKEVSA). Over 42–587 (WTYHYSNKTY…QAGPLTIQET (546 aa)) the chain is Extracellular. Asn-48, Asn-54, and Asn-80 each carry an N-linked (GlcNAc...) asparagine glycan. One can recognise a C-type lectin domain in the interval 58 to 158 (AFCQKYYTDL…PCWKRKRALC (101 aa)). Intrachain disulfides connect Cys-60–Cys-158, Cys-131–Cys-150, Cys-163–Cys-174, Cys-168–Cys-183, Cys-185–Cys-194, Cys-200–Cys-244, Cys-230–Cys-257, Cys-262–Cys-306, Cys-292–Cys-319, Cys-324–Cys-368, Cys-354–Cys-381, Cys-386–Cys-430, Cys-416–Cys-443, Cys-458–Cys-502, Cys-488–Cys-515, Cys-520–Cys-564, and Cys-550–Cys-577. Positions 121, 123, and 124 each coordinate Ca(2+). Asn-123 contacts a carbohydrate. A carbohydrate contacts are provided by Glu-133 and Asn-146. 2 residues coordinate Ca(2+): Asn-146 and Asp-147. The EGF-like domain maps to 159–195 (YRASCQDMSCSKQGECIETIGNYTCSCYPGFYGPECE). The N-linked (GlcNAc...) asparagine glycan is linked to Asn-180. Sushi domains are found at residues 198 to 259 (RECG…QCVA), 260 to 321 (VQCP…VCKA), 322 to 383 (LQCQ…ECQA), 384 to 445 (VTCA…TCEE), 456 to 517 (VQCP…TCRA), and 518 to 579 (VKCA…TCQA). N-linked (GlcNAc...) asparagine glycosylation is found at Asn-212 and Asn-219. Asn-336 carries N-linked (GlcNAc...) asparagine glycosylation. The N-linked (GlcNAc...) asparagine glycan is linked to Asn-481. N-linked (GlcNAc...) asparagine glycans are attached at residues Asn-532, Asn-539, and Asn-557. Residues 588–611 (LTYVGGAAAGTTGLVTGSILLALL) form a helical membrane-spanning segment. Topologically, residues 612-646 (RRRCRQKDDGKSPLNPQSHLGTYGVFTNAAFDPSP) are cytoplasmic. The short motif at 634-637 (YGVF) is the Endocytosis signal element. The interaction with SNX17 stretch occupies residues 637–646 (FTNAAFDPSP).

This sequence belongs to the selectin/LECAM family. Interacts with SNX17. Interacts with SELPLG/PSGL1 and PODXL2 and mediates neutrophil adhesion and leukocyte rolling. This interaction requires the sialyl-Lewis X epitope of SELPLG and PODXL2, and specific tyrosine sulfation on SELPLG. Interacts (via C-type lectin domain) with alpha-IIb/beta3 integrin ITGA2B:ITGB3 and alpha-V/beta-3 integrin ITGAV:ITGB3. Interacts with alpha5/beta1 integrin ITGA5:ITGB1 and alpha4/beta1 integrin ITGA4:ITGB. Stored in the alpha-granules of platelets and Weibel-Palade bodies of endothelial cells. Upon cell activation by agonists, P-selectin is transported rapidly to the cell surface.

It is found in the cell membrane. In terms of biological role, ca(2+)-dependent receptor for myeloid cells that binds to carbohydrates on neutrophils and monocytes. Mediates the interaction of activated endothelial cells or platelets with leukocytes. The ligand recognized is sialyl-Lewis X. Mediates rapid rolling of leukocyte rolling over vascular surfaces during the initial steps in inflammation through interaction with SELPLG. Mediates cell-cell interactions and cell adhesion via the interaction with integrin alpha-IIb/beta3 (ITGA2B:ITGB3) and integrin alpha-V/beta-3 (ITGAV:ITGB3). This Bos taurus (Bovine) protein is P-selectin (SELP).